We begin with the raw amino-acid sequence, 341 residues long: MNSGMGIILTIAAQGLLVIAFVMISLLFLVYGDRKIWAAVQLRRGPNVVGAFGLLQTVADAAKYIFKEVVVPAGVDRPVFFLAPLISFVLAVLAWAVIPFSPGWVLSDINVAILFVFAASSLEVYGVIMGGWASNSKYPFLGSLRSAAQMISYEVSLGLIIIGIIISTGSMNLSHIVEAQDGAFGLFNWYWLPHLPMVALFFISALAETNRPPFDLPEAESELVAGFQVEYSSTPFLLFMAGEYIAIFLMCALMSLLFFGGWLSPIPGLPDGVFWMVAKMAFFFFLFAMVKAIVPRYRYDQLMRIGWKVFLPFSLGWVVLVAFLAKFEVFGGFWARWAMGG.

The next 9 helical transmembrane spans lie at 7 to 27 (IILT…ISLL), 46 to 66 (PNVV…KYIF), 80 to 100 (FFLA…VIPF), 111 to 131 (VAIL…IMGG), 157 to 177 (LGLI…SHIV), 183 to 203 (AFGL…LFFI), 244 to 264 (YIAI…GWLS), 273 to 293 (VFWM…VKAI), and 305 to 325 (IGWK…AFLA).

This sequence belongs to the complex I subunit 1 family. In terms of assembly, NDH-1 is composed of 14 different subunits. Subunits NuoA, H, J, K, L, M, N constitute the membrane sector of the complex.

The protein resides in the cell inner membrane. The enzyme catalyses a quinone + NADH + 5 H(+)(in) = a quinol + NAD(+) + 4 H(+)(out). NDH-1 shuttles electrons from NADH, via FMN and iron-sulfur (Fe-S) centers, to quinones in the respiratory chain. The immediate electron acceptor for the enzyme in this species is believed to be ubiquinone. Couples the redox reaction to proton translocation (for every two electrons transferred, four hydrogen ions are translocated across the cytoplasmic membrane), and thus conserves the redox energy in a proton gradient. This subunit may bind ubiquinone. This is NADH-quinone oxidoreductase subunit H 1 from Cereibacter sphaeroides (strain ATCC 17029 / ATH 2.4.9) (Rhodobacter sphaeroides).